Here is a 578-residue protein sequence, read N- to C-terminus: 2-succinyl-5-enolpyruvyl-6-hydroxy-3-cyclohexene-1-carboxylate synthase (578 aa).

This sequence belongs to the TPP enzyme family. MenD subfamily. In terms of assembly, homodimer. Mg(2+) serves as cofactor. It depends on Mn(2+) as a cofactor. The cofactor is thiamine diphosphate.

It carries out the reaction isochorismate + 2-oxoglutarate + H(+) = 5-enolpyruvoyl-6-hydroxy-2-succinyl-cyclohex-3-ene-1-carboxylate + CO2. Its pathway is quinol/quinone metabolism; 1,4-dihydroxy-2-naphthoate biosynthesis; 1,4-dihydroxy-2-naphthoate from chorismate: step 2/7. The protein operates within quinol/quinone metabolism; menaquinone biosynthesis. Its function is as follows. Catalyzes the thiamine diphosphate-dependent decarboxylation of 2-oxoglutarate and the subsequent addition of the resulting succinic semialdehyde-thiamine pyrophosphate anion to isochorismate to yield 2-succinyl-5-enolpyruvyl-6-hydroxy-3-cyclohexene-1-carboxylate (SEPHCHC). This Bacillus velezensis (strain DSM 23117 / BGSC 10A6 / LMG 26770 / FZB42) (Bacillus amyloliquefaciens subsp. plantarum) protein is 2-succinyl-5-enolpyruvyl-6-hydroxy-3-cyclohexene-1-carboxylate synthase.